The sequence spans 486 residues: Bifunctional protein GlmU (486 aa).

A pyrophosphorylase region spans residues 1 to 241; sequence MSASDSSSAV…ARELAGVNDR (241 aa). Residues 13 to 16, K27, Q84, and 89 to 90 contribute to the UDP-N-acetyl-alpha-D-glucosamine site; these read LAAG and GT. D114 serves as a coordination point for Mg(2+). UDP-N-acetyl-alpha-D-glucosamine contacts are provided by G151, E166, N181, and N239. Mg(2+) is bound at residue N239. Positions 242–262 are linker; sequence VQLAEAGAELNRRTVEAAMRG. Residues 263–486 are N-acetyltransferase; that stretch reads GATIVDPATT…AQNSVPNQEG (224 aa). Residues R344 and K362 each contribute to the UDP-N-acetyl-alpha-D-glucosamine site. H374 functions as the Proton acceptor in the catalytic mechanism. UDP-N-acetyl-alpha-D-glucosamine-binding residues include Y377 and N388. Acetyl-CoA is bound by residues A391, 397–398, S416, and A434; that span reads NY. A disordered region spans residues 464 to 486; sequence KRPGTAAADAAAAAQNSVPNQEG.

In the N-terminal section; belongs to the N-acetylglucosamine-1-phosphate uridyltransferase family. The protein in the C-terminal section; belongs to the transferase hexapeptide repeat family. Homotrimer. The cofactor is Mg(2+).

The protein resides in the cytoplasm. It catalyses the reaction alpha-D-glucosamine 1-phosphate + acetyl-CoA = N-acetyl-alpha-D-glucosamine 1-phosphate + CoA + H(+). The enzyme catalyses N-acetyl-alpha-D-glucosamine 1-phosphate + UTP + H(+) = UDP-N-acetyl-alpha-D-glucosamine + diphosphate. It participates in nucleotide-sugar biosynthesis; UDP-N-acetyl-alpha-D-glucosamine biosynthesis; N-acetyl-alpha-D-glucosamine 1-phosphate from alpha-D-glucosamine 6-phosphate (route II): step 2/2. It functions in the pathway nucleotide-sugar biosynthesis; UDP-N-acetyl-alpha-D-glucosamine biosynthesis; UDP-N-acetyl-alpha-D-glucosamine from N-acetyl-alpha-D-glucosamine 1-phosphate: step 1/1. Its pathway is bacterial outer membrane biogenesis; LPS lipid A biosynthesis. Catalyzes the last two sequential reactions in the de novo biosynthetic pathway for UDP-N-acetylglucosamine (UDP-GlcNAc). The C-terminal domain catalyzes the transfer of acetyl group from acetyl coenzyme A to glucosamine-1-phosphate (GlcN-1-P) to produce N-acetylglucosamine-1-phosphate (GlcNAc-1-P), which is converted into UDP-GlcNAc by the transfer of uridine 5-monophosphate (from uridine 5-triphosphate), a reaction catalyzed by the N-terminal domain. The sequence is that of Bifunctional protein GlmU from Corynebacterium efficiens (strain DSM 44549 / YS-314 / AJ 12310 / JCM 11189 / NBRC 100395).